The primary structure comprises 598 residues: UvrABC system protein C (598 aa).

Residues 14–91 (DSPGCYLHKD…IQKNMPKYNI (78 aa)) enclose the GIY-YIG domain. The UVR domain occupies 196–231 (DKIIEDLRSKMLAASEEMAFERAAEYRDLISGIATM).

It belongs to the UvrC family. Interacts with UvrB in an incision complex.

It localises to the cytoplasm. The UvrABC repair system catalyzes the recognition and processing of DNA lesions. UvrC both incises the 5' and 3' sides of the lesion. The N-terminal half is responsible for the 3' incision and the C-terminal half is responsible for the 5' incision. The protein is UvrABC system protein C of Streptococcus pyogenes serotype M3 (strain ATCC BAA-595 / MGAS315).